The sequence spans 213 residues: Peptidyl-tRNA hydrolase (213 aa).

Tyrosine 26 contributes to the tRNA binding site. Histidine 31 acts as the Proton acceptor in catalysis. Tyrosine 78, asparagine 80, and asparagine 126 together coordinate tRNA.

It belongs to the PTH family. In terms of assembly, monomer.

It is found in the cytoplasm. The enzyme catalyses an N-acyl-L-alpha-aminoacyl-tRNA + H2O = an N-acyl-L-amino acid + a tRNA + H(+). In terms of biological role, hydrolyzes ribosome-free peptidyl-tRNAs (with 1 or more amino acids incorporated), which drop off the ribosome during protein synthesis, or as a result of ribosome stalling. Catalyzes the release of premature peptidyl moieties from peptidyl-tRNA molecules trapped in stalled 50S ribosomal subunits, and thus maintains levels of free tRNAs and 50S ribosomes. This chain is Peptidyl-tRNA hydrolase, found in Nostoc punctiforme (strain ATCC 29133 / PCC 73102).